The sequence spans 189 residues: MTLRVLGVDPGLTRCGIGVVDIEKNRRATMVAVGVVGTSAELTLDKRLLVIAQAIDEWLDRHEPDVVAVERVFSQMNVSTVMGVAQASGVVIAAAARRGIPVALHTPSEVKAAVTGSGTANKDAVTKLVTKILRLDAPPKPADAADALALALTHAWRAGSGMGAASGNSSLTPAQKAWADAEAKARRKR.

Catalysis depends on residues D9, E70, and D143. Mg(2+)-binding residues include D9, E70, and D143. Positions 162–178 (MGAASGNSSLTPAQKAW) are enriched in low complexity. Residues 162 to 189 (MGAASGNSSLTPAQKAWADAEAKARRKR) are disordered. A compositionally biased stretch (basic and acidic residues) spans 179–189 (ADAEAKARRKR).

The protein belongs to the RuvC family. In terms of assembly, homodimer which binds Holliday junction (HJ) DNA. The HJ becomes 2-fold symmetrical on binding to RuvC with unstacked arms; it has a different conformation from HJ DNA in complex with RuvA. In the full resolvosome a probable DNA-RuvA(4)-RuvB(12)-RuvC(2) complex forms which resolves the HJ. It depends on Mg(2+) as a cofactor.

The protein localises to the cytoplasm. It carries out the reaction Endonucleolytic cleavage at a junction such as a reciprocal single-stranded crossover between two homologous DNA duplexes (Holliday junction).. Functionally, the RuvA-RuvB-RuvC complex processes Holliday junction (HJ) DNA during genetic recombination and DNA repair. Endonuclease that resolves HJ intermediates. Cleaves cruciform DNA by making single-stranded nicks across the HJ at symmetrical positions within the homologous arms, yielding a 5'-phosphate and a 3'-hydroxyl group; requires a central core of homology in the junction. The consensus cleavage sequence is 5'-(A/T)TT(C/G)-3'. Cleavage occurs on the 3'-side of the TT dinucleotide at the point of strand exchange. HJ branch migration catalyzed by RuvA-RuvB allows RuvC to scan DNA until it finds its consensus sequence, where it cleaves and resolves the cruciform DNA. This Paenarthrobacter aurescens (strain TC1) protein is Crossover junction endodeoxyribonuclease RuvC.